We begin with the raw amino-acid sequence, 1371 residues long: DNA-directed RNA polymerase subunit beta'' (1371 aa).

The Zn(2+) site is built by Cys220, Cys293, Cys300, and Cys303.

It belongs to the RNA polymerase beta' chain family. RpoC2 subfamily. As to quaternary structure, in plastids the minimal PEP RNA polymerase catalytic core is composed of four subunits: alpha, beta, beta', and beta''. When a (nuclear-encoded) sigma factor is associated with the core the holoenzyme is formed, which can initiate transcription. Zn(2+) is required as a cofactor.

The protein resides in the plastid. It localises to the chloroplast. It carries out the reaction RNA(n) + a ribonucleoside 5'-triphosphate = RNA(n+1) + diphosphate. Its function is as follows. DNA-dependent RNA polymerase catalyzes the transcription of DNA into RNA using the four ribonucleoside triphosphates as substrates. The sequence is that of DNA-directed RNA polymerase subunit beta'' from Lobularia maritima (Sweet alyssum).